The following is a 486-amino-acid chain: Galactose-1-phosphate uridylyltransferase (486 aa).

This sequence belongs to the galactose-1-phosphate uridylyltransferase type 2 family.

It localises to the cytoplasm. It catalyses the reaction alpha-D-galactose 1-phosphate + UDP-alpha-D-glucose = alpha-D-glucose 1-phosphate + UDP-alpha-D-galactose. It functions in the pathway carbohydrate metabolism; galactose metabolism. The polypeptide is Galactose-1-phosphate uridylyltransferase (Lacticaseibacillus casei (strain BL23) (Lactobacillus casei)).